Reading from the N-terminus, the 507-residue chain is UDP-N-acetylhexosamine pyrophosphorylase-like protein 1 (507 aa).

A Substrate binding motif is present at residues 111–114; the sequence is LAGG. UTP contacts are provided by residues 111–114, Lys-125, Gln-199, and Gly-225; that span reads LAGG. Asn-226 serves as a coordination point for substrate. Asp-256 contacts UTP. Positions 306–307 match the Substrate binding motif; sequence EY. UTP is bound at residue Lys-380. Lys-410 provides a ligand contact to substrate.

Belongs to the UDPGP type 1 family.

This Mus musculus (Mouse) protein is UDP-N-acetylhexosamine pyrophosphorylase-like protein 1 (Uap1l1).